A 707-amino-acid polypeptide reads, in one-letter code: Heat shock protein hsp88 (707 aa).

Over residues 662 to 692 the composition is skewed to basic and acidic residues; sequence EAEKAAKKAEEEARKAKEAAEKAAQEGAKDD. The interval 662–707 is disordered; sequence EAEKAAKKAEEEARKAKEAAEKAAQEGAKDDEMTDADAPKPVVEEA.

The protein belongs to the heat shock protein 70 family. In terms of assembly, binds hsp30 independent of temperature or substrate. The N-terminus is blocked.

Its subcellular location is the cytoplasm. This chain is Heat shock protein hsp88 (hsp88), found in Neurospora crassa (strain ATCC 24698 / 74-OR23-1A / CBS 708.71 / DSM 1257 / FGSC 987).